The chain runs to 307 residues: Ornithine carbamoyltransferase (307 aa).

Residues 54-57 (STRT), Q81, R105, and 132-135 (HPCQ) contribute to the carbamoyl phosphate site. L-ornithine-binding positions include N163, D221, and 225–226 (SM). Carbamoyl phosphate-binding positions include 261-262 (CL) and R289.

This sequence belongs to the aspartate/ornithine carbamoyltransferase superfamily. OTCase family.

Its subcellular location is the cytoplasm. It catalyses the reaction carbamoyl phosphate + L-ornithine = L-citrulline + phosphate + H(+). It participates in amino-acid biosynthesis; L-arginine biosynthesis; L-arginine from L-ornithine and carbamoyl phosphate: step 1/3. Its function is as follows. Reversibly catalyzes the transfer of the carbamoyl group from carbamoyl phosphate (CP) to the N(epsilon) atom of ornithine (ORN) to produce L-citrulline. The chain is Ornithine carbamoyltransferase from Aromatoleum aromaticum (strain DSM 19018 / LMG 30748 / EbN1) (Azoarcus sp. (strain EbN1)).